An 86-amino-acid polypeptide reads, in one-letter code: CLAVATA3/ESR (CLE)-related protein 7 (86 aa).

Positions methionine 1–glycine 22 are cleaved as a signal peptide. Asparagine 46 carries an N-linked (GlcNAc...) asparagine glycan. The interval valine 63–isoleucine 86 is disordered. 2 positions are modified to hydroxyproline: proline 68 and proline 71. Residue proline 71 is glycosylated (O-linked (Ara...) hydroxyproline).

Belongs to the CLV3/ESR signal peptide family. In terms of processing, the O-glycosylation (arabinosylation) of the hydroxyproline Pro-71 enhances binding affinity of the CLE7p peptide for its receptor. Expressed in roots and seedlings.

The protein localises to the secreted. The protein resides in the extracellular space. Functionally, extracellular signal peptide that regulates cell fate. This Arabidopsis thaliana (Mouse-ear cress) protein is CLAVATA3/ESR (CLE)-related protein 7.